Reading from the N-terminus, the 904-residue chain is Protein translocase subunit SecA (904 aa).

ATP is bound by residues glutamine 87, 105 to 109 (GEGKT), and aspartate 512. Positions 851–904 (LAKQQQLSHESDNSALMSQEEANVAASLERKVGRNDPCPCGSGKKYKQCHGRLQ) are disordered. Positions 853–871 (KQQQLSHESDNSALMSQEE) are enriched in polar residues. Residues cysteine 888, cysteine 890, cysteine 899, and histidine 900 each coordinate Zn(2+). Residues 894 to 904 (KKYKQCHGRLQ) are compositionally biased toward basic residues.

This sequence belongs to the SecA family. In terms of assembly, monomer and homodimer. Part of the essential Sec protein translocation apparatus which comprises SecA, SecYEG and auxiliary proteins SecDF-YajC and YidC. It depends on Zn(2+) as a cofactor.

The protein localises to the cell inner membrane. The protein resides in the cytoplasm. The enzyme catalyses ATP + H2O + cellular proteinSide 1 = ADP + phosphate + cellular proteinSide 2.. Part of the Sec protein translocase complex. Interacts with the SecYEG preprotein conducting channel. Has a central role in coupling the hydrolysis of ATP to the transfer of proteins into and across the cell membrane, serving both as a receptor for the preprotein-SecB complex and as an ATP-driven molecular motor driving the stepwise translocation of polypeptide chains across the membrane. In Yersinia enterocolitica serotype O:8 / biotype 1B (strain NCTC 13174 / 8081), this protein is Protein translocase subunit SecA.